Reading from the N-terminus, the 166-residue chain is MAIKLEDKKAIVAEVNEAAKAGLSAVVADARGVTVGAMTGLRKEAREAGVYVKVVRNTLLKRAVEGTQFDVLNDVFKGPTLIAFSNEHPGAAARLFKEFAKGQDKFEIKAAAFEGKYLAANQIDVLASLPTRDEGIAQLMSVIQGATSKLARTLAAIRDQKEAAAA.

The protein belongs to the universal ribosomal protein uL10 family. As to quaternary structure, part of the ribosomal stalk of the 50S ribosomal subunit. The N-terminus interacts with L11 and the large rRNA to form the base of the stalk. The C-terminus forms an elongated spine to which L12 dimers bind in a sequential fashion forming a multimeric L10(L12)X complex.

Forms part of the ribosomal stalk, playing a central role in the interaction of the ribosome with GTP-bound translation factors. The sequence is that of Large ribosomal subunit protein uL10 from Ectopseudomonas mendocina (strain ymp) (Pseudomonas mendocina).